The primary structure comprises 259 residues: Snake venom serine protease homolog rhinocerase 2 (259 aa).

Residues 1-17 (VLIRVLANLLLLQLSYA) form the signal peptide. A propeptide spanning residues 18–23 (QESSEL) is cleaved from the precursor. In terms of domain architecture, Peptidase S1 spans 24 to 250 (VIGGDECDIN…YTDWIEGIIA (227 aa)). 6 disulfides stabilise this stretch: Cys30–Cys164, Cys51–Cys67, Cys99–Cys257, Cys143–Cys211, Cys175–Cys190, and Cys201–Cys226. An N-linked (GlcNAc...) asparagine glycan is attached at Asn252.

The protein belongs to the peptidase S1 family. Snake venom subfamily. Expressed by the venom gland.

The protein localises to the secreted. In terms of biological role, snake venom serine protease homolog that may act in the hemostasis system of the prey. This chain is Snake venom serine protease homolog rhinocerase 2, found in Bitis rhinoceros (West African gaboon viper).